Reading from the N-terminus, the 357-residue chain is Chorismate synthase (357 aa).

An NADP(+)-binding site is contributed by Arg47. Residues 123-125 (RAS), Gly281, 296-300 (KPTSS), and Arg324 contribute to the FMN site.

Belongs to the chorismate synthase family. In terms of assembly, homotetramer. FMNH2 serves as cofactor.

The enzyme catalyses 5-O-(1-carboxyvinyl)-3-phosphoshikimate = chorismate + phosphate. It functions in the pathway metabolic intermediate biosynthesis; chorismate biosynthesis; chorismate from D-erythrose 4-phosphate and phosphoenolpyruvate: step 7/7. Its function is as follows. Catalyzes the anti-1,4-elimination of the C-3 phosphate and the C-6 proR hydrogen from 5-enolpyruvylshikimate-3-phosphate (EPSP) to yield chorismate, which is the branch point compound that serves as the starting substrate for the three terminal pathways of aromatic amino acid biosynthesis. This reaction introduces a second double bond into the aromatic ring system. The polypeptide is Chorismate synthase (Chlamydia trachomatis serovar L2 (strain ATCC VR-902B / DSM 19102 / 434/Bu)).